Consider the following 44-residue polypeptide: uncharacterized protein (44 aa).

Residues 19-39 (AVGFVVSFGFFAFLFVMATVI) form a helical membrane-spanning segment.

The protein localises to the cell membrane. This is an uncharacterized protein from Bacillus subtilis (strain 168).